A 436-amino-acid chain; its full sequence is Histidinol dehydrogenase (436 aa).

Residues Tyr-130, Gln-191, and Asn-214 each contribute to the NAD(+) site. Residues Ser-237, Gln-259, and His-262 each coordinate substrate. Zn(2+)-binding residues include Gln-259 and His-262. Residues Glu-327 and His-328 each act as proton acceptor in the active site. 4 residues coordinate substrate: His-328, Asp-361, Glu-415, and His-420. Position 361 (Asp-361) interacts with Zn(2+). Position 420 (His-420) interacts with Zn(2+).

It belongs to the histidinol dehydrogenase family. The cofactor is Zn(2+).

It carries out the reaction L-histidinol + 2 NAD(+) + H2O = L-histidine + 2 NADH + 3 H(+). Its pathway is amino-acid biosynthesis; L-histidine biosynthesis; L-histidine from 5-phospho-alpha-D-ribose 1-diphosphate: step 9/9. Functionally, catalyzes the sequential NAD-dependent oxidations of L-histidinol to L-histidinaldehyde and then to L-histidine. The polypeptide is Histidinol dehydrogenase (Geobacter metallireducens (strain ATCC 53774 / DSM 7210 / GS-15)).